Here is a 340-residue protein sequence, read N- to C-terminus: DNA-directed RNA polymerase subunit alpha (340 aa).

The tract at residues 1–233 (MYKNWRDLIR…EQLSIFINFD (233 aa)) is alpha N-terminal domain (alpha-NTD). The segment at 246–340 (DEIDKINENL…RLRGEQNEEE (95 aa)) is alpha C-terminal domain (alpha-CTD).

This sequence belongs to the RNA polymerase alpha chain family. Homodimer. The RNAP catalytic core consists of 2 alpha, 1 beta, 1 beta' and 1 omega subunit. When a sigma factor is associated with the core the holoenzyme is formed, which can initiate transcription.

It carries out the reaction RNA(n) + a ribonucleoside 5'-triphosphate = RNA(n+1) + diphosphate. DNA-dependent RNA polymerase catalyzes the transcription of DNA into RNA using the four ribonucleoside triphosphates as substrates. This is DNA-directed RNA polymerase subunit alpha from Pelobacter propionicus (strain DSM 2379 / NBRC 103807 / OttBd1).